Here is a 253-residue protein sequence, read N- to C-terminus: Ditrans,polycis-undecaprenyl-diphosphate synthase ((2E,6E)-farnesyl-diphosphate specific) (253 aa).

Aspartate 26 is a catalytic residue. Aspartate 26 contributes to the Mg(2+) binding site. Substrate-binding positions include 27–30, tryptophan 31, arginine 39, histidine 43, and 71–73; these read GNGR and SSE. The active-site Proton acceptor is asparagine 74. Positions 75, 77, and 194 each coordinate substrate. Histidine 199 contributes to the Mg(2+) binding site. 200–202 contacts substrate; the sequence is RIS. Glutamate 213 is a binding site for Mg(2+).

The protein belongs to the UPP synthase family. As to quaternary structure, homodimer. Mg(2+) serves as cofactor.

The enzyme catalyses 8 isopentenyl diphosphate + (2E,6E)-farnesyl diphosphate = di-trans,octa-cis-undecaprenyl diphosphate + 8 diphosphate. In terms of biological role, catalyzes the sequential condensation of isopentenyl diphosphate (IPP) with (2E,6E)-farnesyl diphosphate (E,E-FPP) to yield (2Z,6Z,10Z,14Z,18Z,22Z,26Z,30Z,34E,38E)-undecaprenyl diphosphate (di-trans,octa-cis-UPP). UPP is the precursor of glycosyl carrier lipid in the biosynthesis of bacterial cell wall polysaccharide components such as peptidoglycan and lipopolysaccharide. In Shigella flexneri, this protein is Ditrans,polycis-undecaprenyl-diphosphate synthase ((2E,6E)-farnesyl-diphosphate specific).